The chain runs to 947 residues: Translation initiation factor IF-2 (947 aa).

The segment at Leu-47–Arg-332 is disordered. Residues Ala-86–Leu-95 are compositionally biased toward basic and acidic residues. The segment covering Ala-105–Ala-123 has biased composition (pro residues). Residues Ala-131–Ala-145 show a composition bias toward low complexity. Pro residues-rich tracts occupy residues Pro-146 to Pro-171 and Pro-210 to Pro-225. Residues Arg-255–Gly-318 show a composition bias toward gly residues. Over residues Arg-322–Lys-331 the composition is skewed to basic residues. The tr-type G domain maps to Thr-443–Leu-614. The G1 stretch occupies residues Gly-452–Thr-459. Residue Gly-452–Thr-459 participates in GTP binding. Residues Gly-477–His-481 form a G2 region. Positions Asp-502–Gly-505 are G3. Residues Asp-502–His-506 and Asn-556–Asp-559 each bind GTP. The tract at residues Asn-556 to Asp-559 is G4. The interval Ser-592–Lys-594 is G5.

Belongs to the TRAFAC class translation factor GTPase superfamily. Classic translation factor GTPase family. IF-2 subfamily.

It localises to the cytoplasm. Functionally, one of the essential components for the initiation of protein synthesis. Protects formylmethionyl-tRNA from spontaneous hydrolysis and promotes its binding to the 30S ribosomal subunits. Also involved in the hydrolysis of GTP during the formation of the 70S ribosomal complex. In Mycobacterium marinum (strain ATCC BAA-535 / M), this protein is Translation initiation factor IF-2.